The sequence spans 331 residues: Glycerophosphodiester phosphodiesterase 1 (331 aa).

Residues 1–3 (MWL) are Cytoplasmic-facing. The helical transmembrane segment at 4 to 24 (WEDQGGLLGPFSFVLVLLLVV) threads the bilayer. Residues 25–248 (TRSPFNACVL…PRYSVFWKQS (224 aa)) are Lumenal-facing. The 267-residue stretch at 65–331 (VSAIAHRGGS…SMLEDCAPHF (267 aa)) folds into the GP-PDE domain. Positions 97 and 99 each coordinate Mg(2+). Asn168 carries an N-linked (GlcNAc...) asparagine glycan. Asp174 contacts Mg(2+). The helical transmembrane segment at 249–269 (VFVVLDILLDWSMHNVLWYLC) threads the bilayer. Residues 270 to 331 (GISAFLMQKD…SMLEDCAPHF (62 aa)) lie on the Cytoplasmic side of the membrane.

It belongs to the glycerophosphoryl diester phosphodiesterase family. Interacts with PRAF2. Interacts with RGS16. Requires Mg(2+) as cofactor. Post-translationally, N-glycosylated. In terms of tissue distribution, detected in heart, brain, lung, liver, skeletal muscle, kidney, pituitary and testis.

Its subcellular location is the cell membrane. The protein resides in the cytoplasmic vesicle membrane. The enzyme catalyses sn-glycero-3-phospho-1D-myo-inositol + H2O = myo-inositol + sn-glycerol 3-phosphate + H(+). It catalyses the reaction 1-O-(1Z-octadecenyl)-sn-glycero-3-phospho-(N-5Z,8Z,11Z,14Z-eicosatetraenoyl)-ethanolamine + H2O = 1-O-(1Z-octadecenyl)-sn-glycero-3-phosphate + N-(5Z,8Z,11Z,14Z-eicosatetraenoyl)-ethanolamine + H(+). The catalysed reaction is 1-O-(1Z-octadecenyl)-sn-glycero-3-phospho-(N-9Z-octadecenoyl)-ethanolamine + H2O = 1-O-(1Z-octadecenyl)-sn-glycero-3-phosphate + N-(9Z-octadecenoyl) ethanolamine + H(+). It carries out the reaction 1-O-(1Z-octadecenyl)-sn-glycero-3-phospho-N-hexadecanoyl-ethanolamine + H2O = 1-O-(1Z-octadecenyl)-sn-glycero-3-phosphate + N-hexadecanoylethanolamine + H(+). The enzyme catalyses N-(4Z,7Z,10Z,13Z,16Z,19Z)-docosahexaenoyl-sn-glycero-3-phosphoethanolamine + H2O = N-(4Z,7Z,10Z,13Z,16Z,19Z)-docosahexaenoyl ethanolamine + sn-glycerol 3-phosphate + H(+). It catalyses the reaction N-eicosanoyl-sn-glycero-3-phosphoethanolamine + H2O = N-eicosanoyl ethanolamine + sn-glycerol 3-phosphate + H(+). The catalysed reaction is N-hexadecanoyl-sn-glycero-3-phosphoethanolamine + H2O = N-hexadecanoylethanolamine + sn-glycerol 3-phosphate + H(+). It carries out the reaction N-(9Z-octadecenoyl)-sn-glycero-3-phosphoethanolamine + H2O = N-(9Z-octadecenoyl) ethanolamine + sn-glycerol 3-phosphate + H(+). The enzyme catalyses N-(5Z,8Z,11Z,14Z-eicosatetraenoyl)-sn-glycero-3-phosphoethanolamine + H2O = N-(5Z,8Z,11Z,14Z-eicosatetraenoyl)-ethanolamine + sn-glycerol 3-phosphate + H(+). Inhibited by EDTA, calcium chloride, and zinc chloride. Enhanced by magnesium chloride. Glycerophosphodiester phosphodiesterase activity can be modulated by G-protein signaling pathways. Hydrolyzes the phosphodiester bond of glycerophosphodiesters such as glycerophosphoinositol (GroPIns) and glycerophosphoethanolamine (GroPEth), to yield a glycerol phosphate and an alcohol. Hydrolyzes glycerophospho-N-acylethanolamines to N-acylethanolamines in the brain and participates in bioactive N-acylethanolamine biosynthesis such as anandamide (an endocannabinoid), N-palmitoylethanolamine (an anti-inflammatory), and N-oleoylethanolamine (an anorexic). In addition, has a lysophospholipase D activity by hydrolyzing N-acyl-lysoplasmenylethanolamine (N-acyl-lysoPlsEt) to N-acylethanolamine. However lysophospholipase D activity is lower than glycerophosphodiester phosphodiesterase activity. Has little or no activity towards glycerophosphocholine. The chain is Glycerophosphodiester phosphodiesterase 1 from Rattus norvegicus (Rat).